The sequence spans 1762 residues: Lysine-specific demethylase 3B (1762 aa).

An N-acetylalanine modification is found at alanine 2. Disordered regions lie at residues 253–350 (MDSS…FVPQ) and 426–468 (TTAS…NSSL). Positions 299 to 310 (ATKKLKGDRGEV) are enriched in basic and acidic residues. A compositionally biased stretch (low complexity) spans 426 to 435 (TTASSTPTTV). Over residues 453–465 (GSWSQASGENSRN) the composition is skewed to polar residues. Residues serine 493, serine 547, serine 557, and serine 561 each carry the phosphoserine modification. Residues 574–613 (SVLGADTQPGPKAGSSVDRKVPAESMPTLTPAFPRSLLNT) are disordered. Residue threonine 615 is modified to Phosphothreonine. The segment covering 713 to 746 (TGSPSLSAVGNGRSSSPTNSLTQPIEMPTLSSSP) has biased composition (polar residues). A disordered region spans residues 713 to 763 (TGSPSLSAVGNGRSSSPTNSLTQPIEMPTLSSSPTEERPTVGPGQQDNPLL). Serine 767, serine 774, and serine 779 each carry phosphoserine. Residue lysine 789 forms a Glycyl lysine isopeptide (Lys-Gly) (interchain with G-Cter in SUMO2) linkage. Phosphoserine is present on serine 799. A disordered region spans residues 806 to 853 (ACRQDSDSSTNSDLSDLSDSEEQLQAKSGLKGIPEHLMGKLGPNGERS). The C6-type zinc finger occupies 1032-1057 (CDVCETTLFNIHWVCRKCGFGVCLDC). The segment covering 1146 to 1163 (QLPSVTPSASSGNETTFS) has biased composition (polar residues). Residues 1146-1217 (QLPSVTPSAS…AIRPPCPDTA (72 aa)) form a disordered region. Phosphoserine occurs at positions 1254 and 1260. A disordered region spans residues 1285–1306 (SNSKTEGSSLRDLLHSGPGKLP). The LXXLL motif motif lies at 1294–1298 (LRDLL). In terms of domain architecture, JmjC spans 1499–1722 (MPTRFEDLME…HCFRLTQEFR (224 aa)). The Fe cation site is built by histidine 1561, aspartate 1563, and histidine 1690.

It belongs to the JHDM2 histone demethylase family. Fe(2+) serves as cofactor.

It is found in the nucleus. The enzyme catalyses N(6),N(6)-dimethyl-L-lysyl(9)-[histone H3] + 2 2-oxoglutarate + 2 O2 = L-lysyl(9)-[histone H3] + 2 formaldehyde + 2 succinate + 2 CO2. Histone demethylase that specifically demethylates 'Lys-9' of histone H3, thereby playing a central role in histone code. Demethylation of Lys residue generates formaldehyde and succinate May have tumor suppressor activity. The protein is Lysine-specific demethylase 3B (Kdm3b) of Mus musculus (Mouse).